A 523-amino-acid chain; its full sequence is MSQQVIIFDTTLRDGEQALQASLSAKEKLQIALALERMGVDVMEVGFPVSSPGDFESVQTIARQVKNSRVCALARCVEKDIDVAAESLKVAEAFRIHTFIATSPMHIATKLRSTLDEVIERAIYMVKRARNYTDDVEFSCEDAGRTPIADLARVVEAAINAGATTINIPDTVGYTMPFEFAGIISGLYERVPNIDKAIISVHTHDDLGLAVGNSLAAVHAGARQVEGAMNGIGERAGNCSLEEVIMAIKVRKDILNVHTAINHQEIWRTSQLVSQICNMPIPANKAIVGSGAFAHSSGIHQDGVLKNRENYEIMTPESIGLNQIQLNLTSRSGRAAVKHRMDEMGYKESEYNLDNLYDAFLKLADKKGQVFDYDLEALAFIGKQQEEPEHFRLDYFSVQSGSNDIATAAVKLACGEEVKAEAANGNGPVDAVYQAINRITDYNVELVKYSLTAKGHGKDALGQVDIVANYNGRRFHGVGLATDIVESSAKAMVHVLNNIWRAAEVEKELQRKAQHNENNKETV.

In terms of domain architecture, Pyruvate carboxyltransferase spans 5-267 (VIIFDTTLRD…HTAINHQEIW (263 aa)). Asp-14, His-202, His-204, and Asn-238 together coordinate Mn(2+). A regulatory domain region spans residues 392-523 (RLDYFSVQSG…QHNENNKETV (132 aa)).

This sequence belongs to the alpha-IPM synthase/homocitrate synthase family. LeuA type 1 subfamily. Homodimer. It depends on Mn(2+) as a cofactor.

The protein resides in the cytoplasm. It catalyses the reaction 3-methyl-2-oxobutanoate + acetyl-CoA + H2O = (2S)-2-isopropylmalate + CoA + H(+). It participates in amino-acid biosynthesis; L-leucine biosynthesis; L-leucine from 3-methyl-2-oxobutanoate: step 1/4. In terms of biological role, catalyzes the condensation of the acetyl group of acetyl-CoA with 3-methyl-2-oxobutanoate (2-ketoisovalerate) to form 3-carboxy-3-hydroxy-4-methylpentanoate (2-isopropylmalate). This chain is 2-isopropylmalate synthase, found in Escherichia coli (strain SMS-3-5 / SECEC).